Here is a 118-residue protein sequence, read N- to C-terminus: Large ribosomal subunit protein uL18 (118 aa).

The protein belongs to the universal ribosomal protein uL18 family. As to quaternary structure, part of the 50S ribosomal subunit; part of the 5S rRNA/L5/L18/L25 subcomplex. Contacts the 5S and 23S rRNAs.

Its function is as follows. This is one of the proteins that bind and probably mediate the attachment of the 5S RNA into the large ribosomal subunit, where it forms part of the central protuberance. In Rhizorhabdus wittichii (strain DSM 6014 / CCUG 31198 / JCM 15750 / NBRC 105917 / EY 4224 / RW1) (Sphingomonas wittichii), this protein is Large ribosomal subunit protein uL18.